A 382-amino-acid chain; its full sequence is G-box-binding factor 3 (382 aa).

Basic and acidic residues predominate over residues 1 to 16; it reads MGNSSEEPKPPTKSDK. Disordered regions lie at residues 1–26, 97–221, and 257–285; these read MGNS…DQTN, MGSL…GVKL, and EREL…AETE. Residues 111-130 show a composition bias toward polar residues; it reads TPGTLLSIDTPTKSTGNTDN. The span at 155 to 165 shows a compositional bias: basic and acidic residues; the sequence is ADEHKRSRNSS. Residues 166 to 181 are compositionally biased toward low complexity; that stretch reads ETDGSTDGSDGNTTGA. The span at 182 to 199 shows a compositional bias: basic and acidic residues; that stretch reads DEPKLKRSREGTPTKDGK. Residues 202–216 show a composition bias toward polar residues; the sequence is VQASSFHSVSPSSGD. The bZIP domain occupies 259–322; the sequence is ELKRERRKQS…DKLRGANATL (64 aa). The segment at 261 to 280 is basic motif; the sequence is KRERRKQSNRESARRSRLRK. The segment at 287-322 is leucine-zipper; the sequence is LARKVEALTAENMALRSELNQLNEKSDKLRGANATL. Residues 329–382 are disordered; it reads SEPEKRVPANMLSRVKNSGAGDKNKNQGDNDSNSTSKLHQLLDTKPRAKAVAAG. Positions 357–366 are enriched in polar residues; sequence DNDSNSTSKL.

This sequence belongs to the bZIP family. As to quaternary structure, DNA-binding heterodimer. Interacts with GBF4. Interacts with BZIP16 and BZIP68. As to expression, present only in dark grown leaves and roots.

The protein localises to the nucleus. Functionally, binds to the G-box motif (5'-CCACGTGG-3') of the rbcS-1A gene promoter. G-box and G-box-like motifs are cis-acting elements defined in promoters of certain plant genes which are regulated by such diverse stimuli as light-induction or hormone control. The polypeptide is G-box-binding factor 3 (GBF3) (Arabidopsis thaliana (Mouse-ear cress)).